Here is a 40-residue protein sequence, read N- to C-terminus: Photosystem II reaction center protein J (40 aa).

Residues 8–28 (IPLWVVATIAGLGVITVVGIF) traverse the membrane as a helical segment.

This sequence belongs to the PsbJ family. PSII is composed of 1 copy each of membrane proteins PsbA, PsbB, PsbC, PsbD, PsbE, PsbF, PsbH, PsbI, PsbJ, PsbK, PsbL, PsbM, PsbT, PsbX, PsbY, PsbZ, Psb30/Ycf12, peripheral proteins PsbO, CyanoQ (PsbQ), PsbU, PsbV and a large number of cofactors. It forms dimeric complexes.

It localises to the cellular thylakoid membrane. One of the components of the core complex of photosystem II (PSII). PSII is a light-driven water:plastoquinone oxidoreductase that uses light energy to abstract electrons from H(2)O, generating O(2) and a proton gradient subsequently used for ATP formation. It consists of a core antenna complex that captures photons, and an electron transfer chain that converts photonic excitation into a charge separation. In Nostoc sp. (strain PCC 7120 / SAG 25.82 / UTEX 2576), this protein is Photosystem II reaction center protein J.